Reading from the N-terminus, the 113-residue chain is Putative pterin-4-alpha-carbinolamine dehydratase (113 aa).

This sequence belongs to the pterin-4-alpha-carbinolamine dehydratase family.

It catalyses the reaction (4aS,6R)-4a-hydroxy-L-erythro-5,6,7,8-tetrahydrobiopterin = (6R)-L-erythro-6,7-dihydrobiopterin + H2O. The polypeptide is Putative pterin-4-alpha-carbinolamine dehydratase (Nitrosomonas europaea (strain ATCC 19718 / CIP 103999 / KCTC 2705 / NBRC 14298)).